A 402-amino-acid polypeptide reads, in one-letter code: Type II NADH:quinone oxidoreductase (402 aa).

FAD is bound by residues 12–16 (GAGYA), 39–40 (NK), and V83. E172 is an active-site residue. FAD-binding positions include D302, 319 to 320 (AQ), and K379.

This sequence belongs to the NADH dehydrogenase family. Requires FAD as cofactor.

The protein localises to the cell membrane. The catalysed reaction is a quinone + NADH + H(+) = a quinol + NAD(+). Alternative, nonproton pumping NADH:quinone oxidoreductase that delivers electrons to the respiratory chain by oxidation of NADH and reduction of quinones, and contributes to the regeneration of NAD(+). This Staphylococcus saprophyticus subsp. saprophyticus (strain ATCC 15305 / DSM 20229 / NCIMB 8711 / NCTC 7292 / S-41) protein is Type II NADH:quinone oxidoreductase.